We begin with the raw amino-acid sequence, 1184 residues long: MVGTMPLCGRRAILEDSKADGTEAQPLVPTGCLMVLLHWPGPEGGEPWVTFSQTSLTAEEVCIHIAHKVGITPPCLNLFALYNAQAKVWLPPNHILDTSQDMNLYFRMRFYFRNWHGMNPQEPAVYRCGFPGAETSSDRAEQGVQLLDSASFEYLFEQGKHEFMNDVVSLRDLSSEEEIHHFKNESLGMAFLHLCHLALSRGVPLEEMAREISFKNCIPHSFRQHIRQHNVLTRLRLHRVFRRFLRAFRPGHLSQQVVMVKYLATLERLAPRFGSERIPVCHLEVLAQPERDPCYIQNSGQTAGDPGPELPSGPPTHEVLVTGTGGIQWHPLQTQESERGNSRGNPHGSRSGKKPKAPKAGEHLTESPQEPPWTYFCDFQDISHVVLKERRVHIHLQDNKCLLLCLCSQAEALSFVALVDGYFRLTADSSHYLCHEVAPPRLVTSIQNGIHGPLMDPFVQAKLWPEDGLYLIQWSTSHLHRLILTVAHRNPAFSNGPRGLRLRKFPITQQPGAFVLDGWGRSFASLGDLRLALQGCSLRAGDDCFPLHHCCLPRPREISNLVIMRGSRAHTRPLNLSQLSFHRVHQDEITQLSHLGQGTRTNVYEGLLRVGGPDEGKVDNGCPPEPGGTSGQQLRVVLKVLDPSHHDIALAFYETASLMSQVSHMHLAFLHGVCVRGSENIIVTEFVEHGPLDVWLRRQRGQVPMTWKMVVAQQLASALSYLEDKNLVHGNVCGRNILLARLGLEEGTNPFIKLSDPGVGQGALSREERVERIPWTAPECLSGGTSSLGTATDMWGFGATLLEICFDGEAPLQGRGPSEKERFYTKKHQLPEPSSPELATLTRQCLTYEPAQRPSFRTILRDLTRLQPQNLVGTSAVNSDSPASDPTVFHKRYLKKIRDLGEGHFGKVSLYCYDPTNDGTGEMVAVKALKEGCGPQLRSGWQREIEILRTLYHEHIVKYKGCCEDQGEKSVQLVMEYVPLGSLRDYLPRHCVGLAQLLLFAQQICEGMAYLHAQHYIHRDLAARNVLLDNDRLVKIGDFGLAKAVPEGHEYYRVREDGDSPVFWYAPECLKECKFYYASDVWSFGVTLYELLTYCDSNQSPHMKFTELIGHTQGQMTVLRLTELLERGERLPRPDRCPCEIYHLMKNCWETEASFRPTFQNLVPILQTAQEKYQGQVPSVFSVC.

Residues 33 to 430 form the FERM domain; it reads LMVLLHWPGP…GYFRLTADSS (398 aa). Residues 294–368 form a disordered region; sequence CYIQNSGQTA…KAGEHLTESP (75 aa). Tyr295 is subject to Phosphotyrosine. The 81-residue stretch at 449-529 folds into the SH2; atypical domain; that stretch reads GIHGPLMDPF…GRSFASLGDL (81 aa). Phosphoserine is present on Ser525. In terms of domain architecture, Protein kinase 1 spans 589–866; sequence ITQLSHLGQG…RTILRDLTRL (278 aa). Position 604 is a phosphotyrosine (Tyr604). The residue at position 881 (Ser881) is a Phosphoserine. The 273-residue stretch at 894 to 1166 folds into the Protein kinase 2 domain; sequence LKKIRDLGEG…PTFQNLVPIL (273 aa). Residues 900–908 and Lys927 each bind ATP; that span reads LGEGHFGKV. The Proton acceptor role is filled by Asp1020. The residue at position 1051 (Tyr1051) is a Phosphotyrosine; by autocatalysis. Tyr1052 carries the post-translational modification Phosphotyrosine.

Belongs to the protein kinase superfamily. Tyr protein kinase family. JAK subfamily. In terms of assembly, interacts (via FERM domain) with JAKMIP1. Interacts with PIK3R1; this interaction is important for cell migration. Interacts with MPL/TPOR. Phosphorylation by JAK1 at Tyr-1051 and Tyr-1052 induces kinase activation.

It catalyses the reaction L-tyrosyl-[protein] + ATP = O-phospho-L-tyrosyl-[protein] + ADP + H(+). The protein kinase 1 domain (also termed pseudokinase domain) mediates autoinhibition of the TYK2 kinase domain. Its function is as follows. Tyrosine kinase of the non-receptor type involved in numerous cytokines and interferons signaling, which regulates cell growth, development, cell migration, innate and adaptive immunity. Plays both structural and catalytic roles in numerous interleukins and interferons (IFN-alpha/beta) signaling. Associates with heterodimeric cytokine receptor complexes and activates STAT family members including STAT1, STAT3, STAT4 or STAT6. The heterodimeric cytokine receptor complexes are composed of (1) a TYK2-associated receptor chain (IFNAR1, IL12RB1, IL10RB or IL13RA1), and (2) a second receptor chain associated either with JAK1 or JAK2. In response to cytokine-binding to receptors, phosphorylates and activates receptors (IFNAR1, IL12RB1, IL10RB or IL13RA1), creating docking sites for STAT members. In turn, recruited STATs are phosphorylated by TYK2 (or JAK1/JAK2 on the second receptor chain), form homo- and heterodimers, translocate to the nucleus, and regulate cytokine/growth factor responsive genes. Negatively regulates STAT3 activity by promototing phosphorylation at a specific tyrosine that differs from the site used for signaling. The polypeptide is Non-receptor tyrosine-protein kinase TYK2 (Mus musculus (Mouse)).